Here is a 238-residue protein sequence, read N- to C-terminus: Fish-egg lectin (238 aa).

Repeat copies occupy residues 1-34 (LDCTVIDGNLKQIDAGSGSVVGVNNLNETFVLID), 35-68 (NVFTKISGSLKHFSVGPAGQLGVNTANNIFKYQS), 69-106 (GGFVQLAGLLKQVDAGGDQIIAGVNMYDDIYCLNMDAN), 107-156 (NKWP…CSGS), and 157-199 (GSFI…KPDG). The segment at 1 to 199 (LDCTVIDGNL…TGVTRSKPDG (199 aa)) is 5 X approximate tandem repeats. 4 disulfide bridges follow: Cys3–Cys234, Cys100–Cys153, Cys128–Cys133, and Cys208–Cys226. N-linked (GlcNAc...) asparagine glycosylation is present at Asn27.

This sequence belongs to the tectonin family. As to expression, expressed in the eggs.

It localises to the secreted. In terms of biological role, lipopolysaccharide-binding protein with a very low agglutinating activity for human A-type erythrocytes and interacts with both Gram-positive and Gram-negative bacteria. In Cyprinus carpio (Common carp), this protein is Fish-egg lectin.